The sequence spans 358 residues: Phenylalanine--tRNA ligase alpha subunit (358 aa).

Glu-279 provides a ligand contact to Mg(2+).

It belongs to the class-II aminoacyl-tRNA synthetase family. Phe-tRNA synthetase alpha subunit type 1 subfamily. Tetramer of two alpha and two beta subunits. Requires Mg(2+) as cofactor.

The protein localises to the cytoplasm. It carries out the reaction tRNA(Phe) + L-phenylalanine + ATP = L-phenylalanyl-tRNA(Phe) + AMP + diphosphate + H(+). The sequence is that of Phenylalanine--tRNA ligase alpha subunit from Variovorax paradoxus (strain S110).